A 291-amino-acid chain; its full sequence is uncharacterized protein (291 aa).

Residues P68 to G205 form the DAGKc domain.

This is an uncharacterized protein from Mycobacterium tuberculosis (strain CDC 1551 / Oshkosh).